A 440-amino-acid polypeptide reads, in one-letter code: Protein EFFECTOR OF TRANSCRIPTION (440 aa).

The GIY-YIG domain occupies Ser-131–Pro-167. The tract at residues Leu-172–His-216 is disordered. Polar residues predominate over residues Asn-175–Lys-184. The span at His-194 to Ala-207 shows a compositional bias: basic and acidic residues. 2 Cx9Cx9RCx2HK repeats span residues Cys-247–Lys-272 and Cys-295–Lys-320. A disordered region spans residues Ile-339–Leu-363. Cx9Cx9RCx2HK repeat units lie at residues Cys-365–Lys-390 and Cys-409–Lys-434.

It is found in the nucleus. In terms of biological role, transcription regulator that negatively modulates gibberellin-mediated developmental processes. May act as transcriptional repressor of giberellin controlled genes. Binds DNA without sequence preference. The chain is Protein EFFECTOR OF TRANSCRIPTION from Brassica napus (Rape).